We begin with the raw amino-acid sequence, 371 residues long: tRNA (guanine(26)-N(2))-dimethyltransferase (371 aa).

The Trm1 methyltransferase domain maps to 4 to 368; it reads IEVTEGRTTF…APLDAIAAAL (365 aa). 5 residues coordinate S-adenosyl-L-methionine: Arg41, Arg66, Asp82, Asp108, and Ala109. Positions 237, 240, 256, and 259 each coordinate Zn(2+).

It belongs to the class I-like SAM-binding methyltransferase superfamily. Trm1 family.

The catalysed reaction is guanosine(26) in tRNA + 2 S-adenosyl-L-methionine = N(2)-dimethylguanosine(26) in tRNA + 2 S-adenosyl-L-homocysteine + 2 H(+). Its function is as follows. Dimethylates a single guanine residue at position 26 of a number of tRNAs using S-adenosyl-L-methionine as donor of the methyl groups. In Methanosphaerula palustris (strain ATCC BAA-1556 / DSM 19958 / E1-9c), this protein is tRNA (guanine(26)-N(2))-dimethyltransferase.